We begin with the raw amino-acid sequence, 204 residues long: Arginine exporter protein ArgO (204 aa).

The next 6 helical transmembrane spans lie at 1 to 21, 37 to 57, 67 to 87, 111 to 131, 154 to 174, and 179 to 199; these read MWAV…PLGP, LMVA…GIFG, LLLG…GWGA, IIAT…DTFV, TASF…APWL, and VQRV…LQLA.

The protein belongs to the LysE/ArgO transporter (TC 2.A.75) family.

Its subcellular location is the cell inner membrane. It carries out the reaction L-arginine(in) = L-arginine(out). In terms of biological role, involved in the export of arginine. Important to control the intracellular level of arginine and the correct balance between arginine and lysine. This chain is Arginine exporter protein ArgO, found in Pectobacterium atrosepticum (strain SCRI 1043 / ATCC BAA-672) (Erwinia carotovora subsp. atroseptica).